We begin with the raw amino-acid sequence, 147 residues long: UPF0306 protein KPK_0562 (147 aa).

The protein belongs to the UPF0306 family.

The chain is UPF0306 protein KPK_0562 from Klebsiella pneumoniae (strain 342).